The following is a 104-amino-acid chain: Protein RnfH (104 aa).

The protein belongs to the UPF0125 (RnfH) family.

This chain is Protein RnfH, found in Pseudomonas fluorescens (strain ATCC BAA-477 / NRRL B-23932 / Pf-5).